A 312-amino-acid chain; its full sequence is tRNA dimethylallyltransferase (312 aa).

Position 19-26 (19-26) interacts with ATP; sequence GPSGSGKS. 21 to 26 provides a ligand contact to substrate; it reads SGSGKS. The interval 44–47 is interaction with substrate tRNA; that stretch reads DSLS.

The protein belongs to the IPP transferase family. As to quaternary structure, monomer. Mg(2+) serves as cofactor.

The catalysed reaction is adenosine(37) in tRNA + dimethylallyl diphosphate = N(6)-dimethylallyladenosine(37) in tRNA + diphosphate. Catalyzes the transfer of a dimethylallyl group onto the adenine at position 37 in tRNAs that read codons beginning with uridine, leading to the formation of N6-(dimethylallyl)adenosine (i(6)A). This Helicobacter pylori (strain J99 / ATCC 700824) (Campylobacter pylori J99) protein is tRNA dimethylallyltransferase.